Reading from the N-terminus, the 494-residue chain is Rhamnulokinase (494 aa).

Position 18 to 22 (18 to 22 (ASSGR)) interacts with ATP. Residues Gly-87 and 242-244 (HDT) each bind substrate. Asp-243 functions as the Proton acceptor in the catalytic mechanism. Thr-265 contacts ATP. Substrate is bound at residue Asn-302. Residue Gln-310 participates in ATP binding. An intrachain disulfide couples Cys-360 to Cys-377. Gly-411 contacts ATP.

Belongs to the rhamnulokinase family. Mg(2+) is required as a cofactor.

The enzyme catalyses L-rhamnulose + ATP = L-rhamnulose 1-phosphate + ADP + H(+). Its pathway is carbohydrate degradation; L-rhamnose degradation; glycerone phosphate from L-rhamnose: step 2/3. Its function is as follows. Involved in the catabolism of L-rhamnose (6-deoxy-L-mannose). Catalyzes the transfer of the gamma-phosphate group from ATP to the 1-hydroxyl group of L-rhamnulose to yield L-rhamnulose 1-phosphate. The sequence is that of Rhamnulokinase from Enterococcus faecalis (strain ATCC 700802 / V583).